The primary structure comprises 119 residues: Aspartate 1-decarboxylase (119 aa).

The active-site Schiff-base intermediate with substrate; via pyruvic acid is the S25. Residue S25 is modified to Pyruvic acid (Ser). T57 lines the substrate pocket. The Proton donor role is filled by Y58. 73 to 75 contributes to the substrate binding site; sequence GAA.

Belongs to the PanD family. As to quaternary structure, heterooctamer of four alpha and four beta subunits. Requires pyruvate as cofactor. Is synthesized initially as an inactive proenzyme, which is activated by self-cleavage at a specific serine bond to produce a beta-subunit with a hydroxyl group at its C-terminus and an alpha-subunit with a pyruvoyl group at its N-terminus.

It localises to the cytoplasm. The catalysed reaction is L-aspartate + H(+) = beta-alanine + CO2. It functions in the pathway cofactor biosynthesis; (R)-pantothenate biosynthesis; beta-alanine from L-aspartate: step 1/1. Its function is as follows. Catalyzes the pyruvoyl-dependent decarboxylation of aspartate to produce beta-alanine. This Desulfotalea psychrophila (strain LSv54 / DSM 12343) protein is Aspartate 1-decarboxylase.